A 540-amino-acid polypeptide reads, in one-letter code: MELFIVESPTKAKTIQKFLGKGFLVKATLGHVKDLPEKELGVDLRTLKAKYVYKRGKKKLVEQLKKLSRRSSIVYLGTDPDREGEAIAYFLKKDLEKVNKNIKRAVFYEITPEAIRESIRNAGDVNMNLVYAQFARRILDRLIGYLISPILWKEFKNYKLSAGRVQSPALRLIVEREREIQNFKVKKYYYVKALLRKGSEEFWAIYDYRYENPSDAKIIAKKLEKGYFSVYKVEKKKEKVSPPKPFITSDLQSEANAKFGFSSERTQKLAQELYEKGYITYPRTDSYRMNEKKAKEFMNYIEKKYGKEYVGRLRRFREKATAQGAHECIRPTSLREEIPEREELRLLYDLIFRRTIASLMKEMLLEREKVTVEAITPELKHPVYLVAKGLKIVFDGWSRVYPSEITEEKLPELYEGDLLDLVKTTLEERKTQPPPRYTEGTLIKTLEKLGIGRPSTYATIVKTLKERGYVEVKKKALVPTEIAFQVVEFLMERFPTLMDYKFTAQMEEKLDLVEEGKLNWKSVVYEFMEKIFGKELEMVR.

In terms of domain architecture, Toprim spans 1-110 (MELFIVESPT…NIKRAVFYEI (110 aa)). Mg(2+)-binding residues include Glu7 and Asp79. A Topo IA-type catalytic domain is found at 126–536 (NMNLVYAQFA…FMEKIFGKEL (411 aa)). The interval 161-166 (SAGRVQ) is interaction with DNA. Tyr281 (O-(5'-phospho-DNA)-tyrosine intermediate) is an active-site residue.

The protein belongs to the type IA topoisomerase family. In terms of assembly, monomer. It depends on Mg(2+) as a cofactor.

The catalysed reaction is ATP-independent breakage of single-stranded DNA, followed by passage and rejoining.. Releases the supercoiling and torsional tension of DNA, which is introduced during the DNA replication and transcription, by transiently cleaving and rejoining one strand of the DNA duplex. Introduces a single-strand break via transesterification at a target site in duplex DNA. The scissile phosphodiester is attacked by the catalytic tyrosine of the enzyme, resulting in the formation of a DNA-(5'-phosphotyrosyl)-enzyme intermediate and the expulsion of a 3'-OH DNA strand. The free DNA strand then undergoes passage around the unbroken strand, thus removing DNA supercoils. Finally, in the religation step, the DNA 3'-OH attacks the covalent intermediate to expel the active-site tyrosine and restore the DNA phosphodiester backbone. The polypeptide is DNA topoisomerase 1 (Aquifex aeolicus (strain VF5)).